Reading from the N-terminus, the 330-residue chain is DNA-directed RNA polymerase subunit alpha (330 aa).

The segment at 1–237 (MYTEINEMLT…RQLHAFVDMK (237 aa)) is alpha N-terminal domain (alpha-NTD). The alpha C-terminal domain (alpha-CTD) stretch occupies residues 251 to 330 (FDPVLLRSVD…ENWPPASLGE (80 aa)).

Belongs to the RNA polymerase alpha chain family. In terms of assembly, homodimer. The RNAP catalytic core consists of 2 alpha, 1 beta, 1 beta' and 1 omega subunit. When a sigma factor is associated with the core the holoenzyme is formed, which can initiate transcription.

The catalysed reaction is RNA(n) + a ribonucleoside 5'-triphosphate = RNA(n+1) + diphosphate. Functionally, DNA-dependent RNA polymerase catalyzes the transcription of DNA into RNA using the four ribonucleoside triphosphates as substrates. This is DNA-directed RNA polymerase subunit alpha from Legionella pneumophila (strain Paris).